We begin with the raw amino-acid sequence, 283 residues long: uncharacterized protein (283 aa).

Helical transmembrane passes span 28–48, 65–85, 113–133, 135–155, 200–220, and 246–266; these read LSST…ILLI, LTSL…GFIL, LKRG…FMIV, ILFI…IVFI, LNYI…NFVV, and IVDV…AVFA.

This sequence to M.jannaschii MJ0233.

Its subcellular location is the cell membrane. This is an uncharacterized protein from Methanocaldococcus jannaschii (strain ATCC 43067 / DSM 2661 / JAL-1 / JCM 10045 / NBRC 100440) (Methanococcus jannaschii).